Here is a 133-residue protein sequence, read N- to C-terminus: ATP synthase epsilon chain, chloroplastic (133 aa).

The protein belongs to the ATPase epsilon chain family. In terms of assembly, F-type ATPases have 2 components, CF(1) - the catalytic core - and CF(0) - the membrane proton channel. CF(1) has five subunits: alpha(3), beta(3), gamma(1), delta(1), epsilon(1). CF(0) has three main subunits: a, b and c.

It is found in the plastid. It localises to the chloroplast thylakoid membrane. Its function is as follows. Produces ATP from ADP in the presence of a proton gradient across the membrane. The sequence is that of ATP synthase epsilon chain, chloroplastic from Lotus japonicus (Lotus corniculatus var. japonicus).